A 769-amino-acid polypeptide reads, in one-letter code: Neprilysin-21 (769 aa).

The Cytoplasmic segment spans residues 1–26; it reads MKPENGAATWHPAKRSCLGRLTTLET. A helical; Signal-anchor for type II membrane protein transmembrane segment spans residues 27-47; sequence LLLVFLGLLITALLSVLFLWL. At 48 to 769 the chain is on the extracellular side; that stretch reads WVLDGYKTFT…MNPERKCQVW (722 aa). An N-linked (GlcNAc...) asparagine glycan is attached at asparagine 69. The 685-residue stretch at 85–769 folds into the Peptidase M13 domain; the sequence is VCTSRECVRL…MNPERKCQVW (685 aa). Disulfide bonds link cysteine 86-cysteine 91, cysteine 109-cysteine 754, cysteine 117-cysteine 714, cysteine 173-cysteine 428, and cysteine 638-cysteine 766. Asparagine 221, asparagine 240, asparagine 272, asparagine 307, asparagine 356, asparagine 412, and asparagine 506 each carry an N-linked (GlcNAc...) asparagine glycan. Residue histidine 601 coordinates Zn(2+). Residue glutamate 602 is part of the active site. The Zn(2+) site is built by histidine 605 and glutamate 663. Aspartate 667 acts as the Proton donor in catalysis. 2 N-linked (GlcNAc...) asparagine glycosylation sites follow: asparagine 684 and asparagine 698.

This sequence belongs to the peptidase M13 family. Requires Zn(2+) as cofactor.

It is found in the cell membrane. Probable cell surface protease. This is Neprilysin-21 (nep-21) from Caenorhabditis elegans.